Here is a 236-residue protein sequence, read N- to C-terminus: CD81 antigen (236 aa).

The Cytoplasmic segment spans residues 1-12 (MGVEGCTKCIKY). The chain crosses the membrane as a helical span at residues 13-33 (LLFVFNFVFWLAGGVILGVAL). Over 34-63 (WLRHDPQTTNLLYLELGDRPAPNTFYVGIY) the chain is Extracellular. A helical transmembrane segment spans residues 64 to 84 (ILIAVGAVMMFVGFLGCYGAI). Residues 85 to 89 (QESQC) lie on the Cytoplasmic side of the membrane. A helical membrane pass occupies residues 90–112 (LLGTFFTCLVILFACEVAAGIWG). Residues 113 to 201 (FVNKDQIAKD…GKIDELFSGK (89 aa)) lie on the Extracellular side of the membrane. Disulfide bonds link cysteine 156–cysteine 190 and cysteine 157–cysteine 175. A helical membrane pass occupies residues 202–224 (LYLIGIAAIVVAVIMIFEMILSM). Residue glutamate 219 coordinates cholesterol. The Cytoplasmic segment spans residues 225 to 236 (VLCCGIRNSSVY).

The protein belongs to the tetraspanin (TM4SF) family. In terms of assembly, homodimer. Part of a complex composed of CD19, CR2/CD21, CD81 and IFITM1/CD225 in the membrane of mature B cells. Interacts (via the second extracellular domain) with CD19; this interaction is initiated early during biosynthesis in the ER and enables trafficking of only properly folded CD19. Part of a complex that includes MHC class II/HLA-DR molecules and IFITM1. Interacts with IFITM1. Interacts with IFITM2 and IFITM3. Part of integrin-tetraspanin complex composed of CD9, CD81, beta-1 and beta-2 integrins in the membrane of monocyte/macrophages. Interacts (via the second extracellular domain) with integrin ITGAV:ITGB3. Interacts with CD247/CD3 zeta, ICAM1 and CD9 at the immune synapse on T cell membrane. Part of a GPCR-tetraspanin complex consisting at least of ADGRG1, CD81, possibly CD9, and GNA11 in which CD81 enhances the association of ADGRG1 with GNA11. Part of a complex composed of CD9, CD81, PTGFRN and IGSF8. Interacts directly with IGSF8. Interacts with CD53 and SCIMP. Interacts with SAMHD1 (via its C-terminus). Interacts with glypican GPC3 and with the transcriptional repressor HHEX; binding to GPC3 decreases the availability of free CD81 for binding to HHEX, resulting in nuclear translocation of HHEX and transcriptional repression. Interacts with CLDN1. Interacts with CLDN6 and CLDN9. In terms of processing, not glycosylated. Likely constitutively palmitoylated at low levels. Protein palmitoylation is up-regulated upon coligation of BCR and CD9-C2R-CD81 complexes in lipid rafts.

Its subcellular location is the cell membrane. It localises to the basolateral cell membrane. Its function is as follows. Structural component of specialized membrane microdomains known as tetraspanin-enriched microdomains (TERMs), which act as platforms for receptor clustering and signaling. Essential for trafficking and compartmentalization of CD19 receptor on the surface of activated B cells. Upon initial encounter with microbial pathogens, enables the assembly of CD19-CR2/CD21 and B cell receptor (BCR) complexes at signaling TERMs, lowering the threshold dose of antigen required to trigger B cell clonal expansion and antibody production. In T cells, facilitates the localization of CD247/CD3 zeta at antigen-induced synapses with B cells, providing for costimulation and polarization toward T helper type 2 phenotype. Present in MHC class II compartments, may also play a role in antigen presentation. Can act both as positive and negative regulator of homotypic or heterotypic cell-cell fusion processes. Positively regulates sperm-egg fusion and may be involved in acrosome reaction. In myoblasts, associates with CD9 and PTGFRN and inhibits myotube fusion during muscle regeneration. In macrophages, associates with CD9 and beta-1 and beta-2 integrins, and prevents macrophage fusion into multinucleated giant cells specialized in ingesting complement-opsonized large particles. Also prevents the fusion of mononuclear cell progenitors into osteoclasts in charge of bone resorption. May regulate the compartmentalization of enzymatic activities. In T cells, defines the subcellular localization of dNTPase SAMHD1 and permits its degradation by the proteasome, thereby controlling intracellular dNTP levels. Also involved in cell adhesion and motility. Positively regulates integrin-mediated adhesion of macrophages, particularly relevant for the inflammatory response in the lung. This chain is CD81 antigen (CD81), found in Bos taurus (Bovine).